A 130-amino-acid polypeptide reads, in one-letter code: Small ribosomal subunit protein uS11 (130 aa).

The protein belongs to the universal ribosomal protein uS11 family. As to quaternary structure, part of the 30S ribosomal subunit. Interacts with proteins S7 and S18. Binds to IF-3.

In terms of biological role, located on the platform of the 30S subunit, it bridges several disparate RNA helices of the 16S rRNA. Forms part of the Shine-Dalgarno cleft in the 70S ribosome. In Sulfurimonas denitrificans (strain ATCC 33889 / DSM 1251) (Thiomicrospira denitrificans (strain ATCC 33889 / DSM 1251)), this protein is Small ribosomal subunit protein uS11.